Consider the following 110-residue polypeptide: Light-harvesting complex-like protein OHP1, chloroplastic (110 aa).

A chloroplast-targeting transit peptide spans Met-1 to Ala-41. The Stromal segment spans residues Ala-42–Arg-74. A helical transmembrane segment spans residues Ala-75 to Leu-95. The Lumenal portion of the chain corresponds to Glu-96–Leu-110.

This sequence belongs to the ELIP/psbS family. As to quaternary structure, may bind chlorophyll and form dimers in the thylakoid membrane. Component of a high molecular weight complex containing OHP1, OHP2 and HCF244, and PSII core proteins D1/D2, HCF136 and HCF173. Interacts with HCF244. Forms a trimeric complex with OHP2 and HCF244 that mutually stabilizes each subunit. As to expression, mostly expressed in cotyledons and shoot apices.

Its subcellular location is the plastid. The protein resides in the chloroplast thylakoid membrane. In terms of biological role, may play a photoprotective role in the thylakoid membrane in response to light stress. Involved in photosystems I (PSI) and II (PSII) core proteins function. Forms a trimeric complex with OHP2 and HCF244 that is required to promote PSII core subunit assembly. The trimeric complex forms a transient PSII reaction center-like complex with PsbA, PsbD, PsbE, PsbF and PsbI subunits in thylakoids for early assembly of PSII as well as PSII repair. The trimeric complex is required for the recruitment of ribosomes to the psbA mRNA during PSII biogenesis and repair. Forms a heterodimer with OHP1 that binds chlorophylls and carotenoids, and that may function in the delivery of pigments to the PsbA subunit of PSII. The protein is Light-harvesting complex-like protein OHP1, chloroplastic of Arabidopsis thaliana (Mouse-ear cress).